Here is a 329-residue protein sequence, read N- to C-terminus: tRNA uridine(34) hydroxylase (329 aa).

Positions 123-217 (SDPDVILVDT…YLEEVPEEES (95 aa)) constitute a Rhodanese domain. The Cysteine persulfide intermediate role is filled by Cys177. Residues 285-329 (REKQVQLSNARGETHVGGDAAHLIDQRKKEKLAHKEQQRSGKKAK) are disordered. A compositionally biased stretch (basic and acidic residues) spans 296–323 (GETHVGGDAAHLIDQRKKEKLAHKEQQR).

Belongs to the TrhO family.

It catalyses the reaction uridine(34) in tRNA + AH2 + O2 = 5-hydroxyuridine(34) in tRNA + A + H2O. In terms of biological role, catalyzes oxygen-dependent 5-hydroxyuridine (ho5U) modification at position 34 in tRNAs. This chain is tRNA uridine(34) hydroxylase, found in Vibrio atlanticus (strain LGP32) (Vibrio splendidus (strain Mel32)).